The sequence spans 411 residues: MSSTPVTLKAVQSEVSARNAKSSEAEVKRCEDLILSYAKQLAKEKDITGIRTLVKSIQNFYDLVGKARASKLIRDIVEFALTVEQGKQEKEEKIDLLKNCIEWATSNKREFLRRSLQARLVRLYNDVREFTEGQKLGQELSKELKKLEDRELLIEVSIEESKCAFNLNNLSKAKTALLTAKTSSNSAFASPQLQAAVDMQSGVLYSAEERDYKTSFSYFYEAFEGYGSIGDKVNATGALKYMILCKIMLNETEQIPAMLSTKEVLPYNTSPRIVAIRAMADAFRKRSLKDFMKALEEHKKELVEDKVVAVHSQNLERTMLEKEISRVIEPYSEIELSYIARVIGMTVPPTEKAIARMILDKKLMGSIDQHGDTVVIYPKAGATKQFTRALTTIRELTKTVDVSYSRTKVIK.

A PCI domain is found at 212 to 381 (YKTSFSYFYE…DTVVIYPKAG (170 aa)).

The protein belongs to the proteasome subunit S9 family. Component of the lid subcomplex of the 19S proteasome regulatory particle complex (also named PA700 complex). The 26S proteasome consists of a 20S proteasome core and two 19S regulatory subunits.

In terms of biological role, component of the lid subcomplex of the 26S proteasome, a multiprotein complex involved in the ATP-dependent degradation of ubiquitinated proteins. In the complex, rpn-6.2 is required for proteasome assembly. This chain is Probable 26S proteasome regulatory subunit rpn-6.2, found in Caenorhabditis briggsae.